The sequence spans 456 residues: Enolase (456 aa).

Q169 is a (2R)-2-phosphoglycerate binding site. E211 serves as the catalytic Proton donor. The Mg(2+) site is built by D252, E314, and D341. Residues K366, R395, S396, and K417 each contribute to the (2R)-2-phosphoglycerate site. The active-site Proton acceptor is the K366.

Belongs to the enolase family. The cofactor is Mg(2+).

It localises to the cytoplasm. It is found in the secreted. The protein localises to the cell surface. The enzyme catalyses (2R)-2-phosphoglycerate = phosphoenolpyruvate + H2O. It functions in the pathway carbohydrate degradation; glycolysis; pyruvate from D-glyceraldehyde 3-phosphate: step 4/5. In terms of biological role, catalyzes the reversible conversion of 2-phosphoglycerate (2-PG) into phosphoenolpyruvate (PEP). It is essential for the degradation of carbohydrates via glycolysis. This Metamycoplasma arthritidis (strain 158L3-1) (Mycoplasma arthritidis) protein is Enolase.